A 193-amino-acid chain; its full sequence is Ribosomal RNA large subunit methyltransferase E (193 aa).

S-adenosyl-L-methionine is bound by residues Gly-51, Trp-53, Asp-69, Asp-85, and Asp-108. Lys-148 functions as the Proton acceptor in the catalytic mechanism.

The protein belongs to the class I-like SAM-binding methyltransferase superfamily. RNA methyltransferase RlmE family.

It localises to the cytoplasm. It catalyses the reaction uridine(2552) in 23S rRNA + S-adenosyl-L-methionine = 2'-O-methyluridine(2552) in 23S rRNA + S-adenosyl-L-homocysteine + H(+). In terms of biological role, specifically methylates the uridine in position 2552 of 23S rRNA at the 2'-O position of the ribose in the fully assembled 50S ribosomal subunit. The sequence is that of Ribosomal RNA large subunit methyltransferase E from Methanoregula boonei (strain DSM 21154 / JCM 14090 / 6A8).